A 515-amino-acid chain; its full sequence is Galactose-1-phosphate uridylyltransferase (515 aa).

This sequence belongs to the galactose-1-phosphate uridylyltransferase type 2 family.

The protein resides in the cytoplasm. The catalysed reaction is alpha-D-galactose 1-phosphate + UDP-alpha-D-glucose = alpha-D-glucose 1-phosphate + UDP-alpha-D-galactose. Its pathway is carbohydrate metabolism; galactose metabolism. Its function is as follows. Transfers the UMP unit from UDP-glucose (UDP-Glc) to Gal1P. Can also transfer the UMP unit to GlcNAc1P and GalNAc1P. Involved in the general galactose metabolism, and also involved in the lacto-N-biose I/galacto-N-biose (LNB/GNB) degradation pathway, which is important for host intestinal colonization by bifidobacteria. This chain is Galactose-1-phosphate uridylyltransferase, found in Bifidobacterium longum subsp. longum (strain ATCC 15707 / DSM 20219 / JCM 1217 / NCTC 11818 / E194b).